The following is a 128-amino-acid chain: MRHRVAHRKFSRTSAHRISMLLNLSISLIKHERITTTLPKAKELRPYVEKLITIGKVYREKNLVYGKRLLISKLKNIDATDKLIDVLSVRYKSRNGGYTRIMKNGFRKGDCAPIAIIELVDRQIVSQS.

This sequence belongs to the bacterial ribosomal protein bL17 family. Part of the 50S ribosomal subunit. Contacts protein L32.

This is Large ribosomal subunit protein bL17 from Ehrlichia ruminantium (strain Gardel).